The chain runs to 793 residues: PC3-like endoprotease variant A (793 aa).

An N-terminal signal peptide occupies residues 1-29 (MNYRGIYRRRYVFVLLLLVAVVNISYGWT). A propeptide spanning residues 30-152 (VLKNKDYKRR…QQKILERVKR (123 aa)) is cleaved from the precursor. N-linked (GlcNAc...) asparagine glycans are attached at residues Asn-62 and Asn-190. The Peptidase S8 domain occupies 164–486 (MWYLLNTGQA…FGRLDANAMV (323 aa)). Active-site charge relay system residues include Asp-202 and His-242. Intrachain disulfides connect Cys-259–Cys-411 and Cys-351–Cys-381. Catalysis depends on Ser-419, which acts as the Charge relay system. The region spanning 495–638 (LPAQRKCTAA…EERVIDTQTK (144 aa)) is the P/Homo B domain. A disulfide bond links Cys-501 and Cys-527.

This sequence belongs to the peptidase S8 family. Furin subfamily. Predominantly in the body column.

In terms of biological role, probably involved in the processing of hormone and other protein precursors at sites comprised of pairs of basic amino acid residues. In Hydra vulgaris (Hydra), this protein is PC3-like endoprotease variant A.